The primary structure comprises 152 residues: Cytochrome c-type biogenesis protein CcmE (152 aa).

Residues 1-8 lie on the Cytoplasmic side of the membrane; that stretch reads MQARRKTR. Residues 9-29 form a helical; Signal-anchor for type II membrane protein membrane-spanning segment; that stretch reads LYIVLAVLAGLGLTVSLTLYA. Residues 30-152 lie on the Periplasmic side of the membrane; the sequence is LSSNIDLFYT…MTPEKTGAQP (123 aa). Positions 130 and 134 each coordinate heme. Residues 133-152 are disordered; sequence NYTPPEVKNAMTPEKTGAQP.

Belongs to the CcmE/CycJ family.

It is found in the cell inner membrane. Functionally, heme chaperone required for the biogenesis of c-type cytochromes. Transiently binds heme delivered by CcmC and transfers the heme to apo-cytochromes in a process facilitated by CcmF and CcmH. This chain is Cytochrome c-type biogenesis protein CcmE, found in Klebsiella pneumoniae (strain 342).